A 1377-amino-acid polypeptide reads, in one-letter code: Clustered mitochondria protein homolog (1377 aa).

Residues 1–61 (MLKSIQRNGK…GETKKKSDSE (61 aa)) are disordered. The 243-residue stretch at 353–595 (RAEDTFSSKL…RTFPPDVNFL (243 aa)) folds into the Clu domain. The stretch at 519–552 (VYGSIDFGKTVLSHEKYLELLNNAGKHLKIYPHS) is one TPR 1 repeat. Disordered regions lie at residues 651 to 700 (NKRQ…VPKV) and 886 to 917 (DVLT…KSSF). The segment covering 655–690 (QKQDTPKEETKAIEPAAKEDSANNNKEEPAAKKGEP) has biased composition (basic and acidic residues). Residues 886 to 896 (DVLTKSGSSGK) are compositionally biased toward polar residues. TPR repeat units follow at residues 1022-1055 (AYNF…LNNV), 1148-1181 (ALLD…NIKY), and 1183-1216 (GEKS…EKET). The interval 1310 to 1377 (KEGGAAGESS…SKANPVASSS (68 aa)) is disordered. Low complexity predominate over residues 1364–1377 (ASSSSKANPVASSS).

The protein belongs to the CLU family.

Its subcellular location is the cytoplasm. Its function is as follows. mRNA-binding protein involved in proper cytoplasmic distribution of mitochondria. The protein is Clustered mitochondria protein homolog of Culex quinquefasciatus (Southern house mosquito).